Reading from the N-terminus, the 177-residue chain is Large ribosomal subunit protein uL6 (177 aa).

This sequence belongs to the universal ribosomal protein uL6 family. In terms of assembly, part of the 50S ribosomal subunit.

This protein binds to the 23S rRNA, and is important in its secondary structure. It is located near the subunit interface in the base of the L7/L12 stalk, and near the tRNA binding site of the peptidyltransferase center. The polypeptide is Large ribosomal subunit protein uL6 (Vibrio atlanticus (strain LGP32) (Vibrio splendidus (strain Mel32))).